Consider the following 374-residue polypeptide: P2Y purinoceptor 11 (374 aa).

The Extracellular portion of the chain corresponds to 1-29; sequence MAANVSGAKSCPANFLAAADDKLSGFQGD. Asn-4 carries an N-linked (GlcNAc...) asparagine glycan. A helical membrane pass occupies residues 30–50; it reads FLWPILVVEFLVAVASNGLAL. The Cytoplasmic segment spans residues 51–64; the sequence is YRFSIRKQRPWHPA. A helical transmembrane segment spans residues 65 to 85; that stretch reads VVFSVQLAVSDLLCALTLPPL. At 86–116 the chain is on the extracellular side; it reads AAYLYPPKHWRYGEAACRLERFLFTCNLLGS. Cys-102 and Cys-180 are oxidised to a cystine. The helical transmembrane segment at 117–137 threads the bilayer; it reads VIFITCISLNRYLGIVHPFFA. At 138-146 the chain is on the cytoplasmic side; the sequence is RSHLRPKHA. The chain crosses the membrane as a helical span at residues 147 to 167; it reads WAVSAAGWVLAALLAMPTLSF. At 168–206 the chain is on the extracellular side; the sequence is SHLKRPQQGAGNCSVARPEACIKCLGTADHGLAAYRAYS. Asn-179 carries an N-linked (GlcNAc...) asparagine glycan. A helical membrane pass occupies residues 207–227; sequence LVLAGLGCGLPLLLTLAAYGA. At 228–245 the chain is on the cytoplasmic side; sequence LGRAVLRSPGMTVAEKLR. The helical transmembrane segment at 246-266 threads the bilayer; sequence VAALVASGVALYASSYVPYHI. The Extracellular segment spans residues 267 to 308; sequence MRVLNVDARRRWSTRCPSFADIAQATAALELGPYVGYQVMRG. The chain crosses the membrane as a helical span at residues 309–329; sequence LMPLAFCVHPLLYMAAVPSLG. Residues 330-374 are Cytoplasmic-facing; sequence CCCRHCPGYRDSWNPEDAKSTGQALPLNATAAPKPSEPQSRELSQ. The segment at 345–374 is disordered; the sequence is EDAKSTGQALPLNATAAPKPSEPQSRELSQ.

The protein belongs to the G-protein coupled receptor 1 family. In terms of tissue distribution, highest expression in liver and spleen.

The protein localises to the cell membrane. Its function is as follows. Receptor for ATP and ADP coupled to G-proteins that activate both phosphatidylinositol-calcium and adenylyl cyclase second messenger systems. Not activated by UTP or UDP. In Homo sapiens (Human), this protein is P2Y purinoceptor 11 (P2RY11).